The chain runs to 301 residues: Polyamine aminopropyltransferase (301 aa).

Positions 4 to 240 (WHWLLEWQTP…GLWGFVYGGV (237 aa)) constitute a PABS domain. Q33 is a binding site for S-methyl-5'-thioadenosine. Positions 64 and 89 each coordinate spermidine. Residues D109 and 141-142 (DG) each bind S-methyl-5'-thioadenosine. The active-site Proton acceptor is the D159.

This sequence belongs to the spermidine/spermine synthase family. In terms of assembly, homodimer or homotetramer.

The protein localises to the cytoplasm. The catalysed reaction is S-adenosyl 3-(methylsulfanyl)propylamine + putrescine = S-methyl-5'-thioadenosine + spermidine + H(+). It participates in amine and polyamine biosynthesis; spermidine biosynthesis; spermidine from putrescine: step 1/1. Catalyzes the irreversible transfer of a propylamine group from the amino donor S-adenosylmethioninamine (decarboxy-AdoMet) to putrescine (1,4-diaminobutane) to yield spermidine. The polypeptide is Polyamine aminopropyltransferase (Saccharolobus islandicus (strain Y.N.15.51 / Yellowstone #2) (Sulfolobus islandicus)).